Here is a 433-residue protein sequence, read N- to C-terminus: Glutamate-1-semialdehyde 2,1-aminomutase (433 aa).

The residue at position 271 (Lys-271) is an N6-(pyridoxal phosphate)lysine.

This sequence belongs to the class-III pyridoxal-phosphate-dependent aminotransferase family. HemL subfamily. As to quaternary structure, homodimer. Pyridoxal 5'-phosphate serves as cofactor.

It is found in the cytoplasm. It catalyses the reaction (S)-4-amino-5-oxopentanoate = 5-aminolevulinate. The protein operates within porphyrin-containing compound metabolism; protoporphyrin-IX biosynthesis; 5-aminolevulinate from L-glutamyl-tRNA(Glu): step 2/2. It participates in porphyrin-containing compound metabolism; chlorophyll biosynthesis. The polypeptide is Glutamate-1-semialdehyde 2,1-aminomutase (Prochlorococcus marinus subsp. pastoris (strain CCMP1986 / NIES-2087 / MED4)).